The primary structure comprises 1368 residues: Beclin-1-like protein A (1368 aa).

Composition is skewed to low complexity over residues 24 to 57 and 122 to 135; these read GSGS…NNGP and NSII…SPSN. 5 disordered regions span residues 24–64, 122–249, 331–431, 819–874, and 992–1048; these read GSGS…PSSE, NSII…SLMM, NKNN…STNS, TITP…NNNN, and IDGN…NDNN. The segment covering 136-147 has biased composition (polar residues); it reads AITRNNSFNMDP. Positions 148–167 are enriched in low complexity; that stretch reads NNNNNNNNNNNNNNNNNNNN. Polar residues predominate over residues 168–177; sequence GEYMNSSIVF. Low complexity predominate over residues 179–246; that stretch reads NNVNNNNNNP…INNSVNSVNS (68 aa). Composition is skewed to low complexity over residues 992–1005 and 1015–1048; these read IDGN…NDNN and NNNN…NDNN. The stretch at 1047–1150 forms a coiled coil; that stretch reads NNYNFENEIN…AIRDQLERVS (104 aa).

This sequence belongs to the beclin family.

It localises to the endosome membrane. In terms of biological role, involved in autophagy. May be required to recruit the atg8-phosphatidylinositol conjugate and the atg12-atg5 conjugate to the pre-autophagosomal structure. Required for normal survival when exposed to pathogenic bacteria S.typhimurium by promoting autophagic degradation of intracellular S.typhimurium. The chain is Beclin-1-like protein A (atg6A) from Dictyostelium discoideum (Social amoeba).